The sequence spans 268 residues: Tryptophan synthase alpha chain (268 aa).

Active-site proton acceptor residues include glutamate 49 and aspartate 60.

This sequence belongs to the TrpA family. Tetramer of two alpha and two beta chains.

It carries out the reaction (1S,2R)-1-C-(indol-3-yl)glycerol 3-phosphate + L-serine = D-glyceraldehyde 3-phosphate + L-tryptophan + H2O. The protein operates within amino-acid biosynthesis; L-tryptophan biosynthesis; L-tryptophan from chorismate: step 5/5. In terms of biological role, the alpha subunit is responsible for the aldol cleavage of indoleglycerol phosphate to indole and glyceraldehyde 3-phosphate. The chain is Tryptophan synthase alpha chain from Photorhabdus laumondii subsp. laumondii (strain DSM 15139 / CIP 105565 / TT01) (Photorhabdus luminescens subsp. laumondii).